We begin with the raw amino-acid sequence, 338 residues long: MSTLRLLISDSYDPWFNLAVEECIFRQMPATQRVLFLWRNADTVVIGRAQNPWKECNTRRMEEDNVRLARRSSGGGAVFHDLGNTCFTFMAGKPEYDKTISTSIVLNALNALGVSAEASGRNDLVVKTAEGDRKVSGSAYRETKDRGFHHGTLLLNSDLSRLANYLNPDKKKLAAKGITSVRSRVTNLTELLPGITHEQVCEAITEAFFAHYGERVEAEIISPDKTPDLPNFAETFARQSSWEWNFGQAPEFSHLLDERFTWGGVELHFDVEKGHITRAQVFTDSLNPAPLEALAGRLQGCLYRADMLQQECEALLVDFPEQEKELRELSAWIAGAVR.

The 188-residue stretch at 29 to 216 (PATQRVLFLW…AFFAHYGERV (188 aa)) folds into the BPL/LPL catalytic domain. Residues R71, 76-79 (GAVF), and K134 contribute to the ATP site. K134 is a binding site for (R)-lipoate.

This sequence belongs to the LplA family. Monomer.

It is found in the cytoplasm. It catalyses the reaction L-lysyl-[lipoyl-carrier protein] + (R)-lipoate + ATP = N(6)-[(R)-lipoyl]-L-lysyl-[lipoyl-carrier protein] + AMP + diphosphate + H(+). The protein operates within protein modification; protein lipoylation via exogenous pathway; protein N(6)-(lipoyl)lysine from lipoate: step 1/2. Its pathway is protein modification; protein lipoylation via exogenous pathway; protein N(6)-(lipoyl)lysine from lipoate: step 2/2. Functionally, catalyzes both the ATP-dependent activation of exogenously supplied lipoate to lipoyl-AMP and the transfer of the activated lipoyl onto the lipoyl domains of lipoate-dependent enzymes. This is Lipoate-protein ligase A from Escherichia coli O81 (strain ED1a).